The sequence spans 526 residues: Exodeoxyribonuclease 7 large subunit (526 aa).

Residues 499–526 (AGEDGTPSQAPKKRPARAGEPTKQGSLF) are disordered.

It belongs to the XseA family. As to quaternary structure, heterooligomer composed of large and small subunits.

It localises to the cytoplasm. The catalysed reaction is Exonucleolytic cleavage in either 5'- to 3'- or 3'- to 5'-direction to yield nucleoside 5'-phosphates.. In terms of biological role, bidirectionally degrades single-stranded DNA into large acid-insoluble oligonucleotides, which are then degraded further into small acid-soluble oligonucleotides. The chain is Exodeoxyribonuclease 7 large subunit from Sinorhizobium medicae (strain WSM419) (Ensifer medicae).